We begin with the raw amino-acid sequence, 828 residues long: Translation initiation factor IF-2 (828 aa).

2 disordered regions span residues serine 48–phenylalanine 76 and alanine 112–leucine 148. Over residues tyrosine 49–leucine 58 the composition is skewed to polar residues. The segment covering leucine 65–glutamate 74 has biased composition (low complexity). A compositionally biased stretch (acidic residues) spans aspartate 116–serine 126. Positions aspartate 127–glutamate 144 are enriched in basic and acidic residues. The tr-type G domain occupies serine 326–lysine 496. Residues glycine 335–threonine 342 are G1. Glycine 335–threonine 342 provides a ligand contact to GTP. The tract at residues glycine 360–histidine 364 is G2. The tract at residues aspartate 382–glycine 385 is G3. GTP contacts are provided by residues aspartate 382–histidine 386 and asparagine 436–aspartate 439. Positions asparagine 436 to aspartate 439 are G4. A G5 region spans residues serine 472–leucine 474.

This sequence belongs to the TRAFAC class translation factor GTPase superfamily. Classic translation factor GTPase family. IF-2 subfamily.

The protein localises to the cytoplasm. Functionally, one of the essential components for the initiation of protein synthesis. Protects formylmethionyl-tRNA from spontaneous hydrolysis and promotes its binding to the 30S ribosomal subunits. Also involved in the hydrolysis of GTP during the formation of the 70S ribosomal complex. The sequence is that of Translation initiation factor IF-2 from Rickettsia bellii (strain OSU 85-389).